The following is a 354-amino-acid chain: Mitogen-activated protein kinase kinase 1 (354 aa).

One can recognise a Protein kinase domain in the interval 68-328 (LEVIKVIGKG…AKELLEHKFV (261 aa)). Residues 74-82 (IGKGSSGNV) and K97 contribute to the ATP site. D190 (proton acceptor) is an active-site residue. Residue T218 is modified to Phosphothreonine. At S224 the chain carries Phosphoserine. T228 carries the phosphothreonine modification.

This sequence belongs to the protein kinase superfamily. STE Ser/Thr protein kinase family. MAP kinase kinase subfamily. As to quaternary structure, interacts with MEKK1 and MPK4. May form a ternary complex composed of MEKK1 and MKK1/MKK2 and MPK4. Interacts with P.syringae type III effector HopF2. Interacts with MPK11. Post-translationally, phosphorylation at Thr-218 and Ser-224 by MAP kinase kinase kinases positively regulates kinase activity. Expressed in roots, stem, flowers and siliques.

It carries out the reaction L-seryl-[protein] + ATP = O-phospho-L-seryl-[protein] + ADP + H(+). The catalysed reaction is L-threonyl-[protein] + ATP = O-phospho-L-threonyl-[protein] + ADP + H(+). It catalyses the reaction L-tyrosyl-[protein] + ATP = O-phospho-L-tyrosyl-[protein] + ADP + H(+). Its activity is regulated as follows. Activated through serine and threonine phosphorylation in response to wounding, cold, drought, salt stresses, abscisic acid (ABA), hydrogen peroxide, bacterial flagellin and laminarin beta-glucan. Functionally, MEKK1, MKK1/MKK2 and MPK4/MPK6 function in a signaling pathway that modulates the expression of genes responding to biotic and abiotic stresses and also plays an important role in pathogen defense by negatively regulating innate immunity. Activates by phosphorylation the downstream MPK4. Acts redundantly with MKK2. MKK1-MPK6 module mediates abscisic acid (ABA)-dependent CAT1 expression with H(2)O(2) production and response to drought and salt stress. MKK1-MPK6 module is also involved in sugar signaling during the process of seed germination. This Arabidopsis thaliana (Mouse-ear cress) protein is Mitogen-activated protein kinase kinase 1 (MKK1).